We begin with the raw amino-acid sequence, 438 residues long: Thymidine phosphorylase (438 aa).

The protein belongs to the thymidine/pyrimidine-nucleoside phosphorylase family. As to quaternary structure, homodimer.

It catalyses the reaction thymidine + phosphate = 2-deoxy-alpha-D-ribose 1-phosphate + thymine. Its pathway is pyrimidine metabolism; dTMP biosynthesis via salvage pathway; dTMP from thymine: step 1/2. Functionally, the enzymes which catalyze the reversible phosphorolysis of pyrimidine nucleosides are involved in the degradation of these compounds and in their utilization as carbon and energy sources, or in the rescue of pyrimidine bases for nucleotide synthesis. The sequence is that of Thymidine phosphorylase from Agrobacterium fabrum (strain C58 / ATCC 33970) (Agrobacterium tumefaciens (strain C58)).